The sequence spans 265 residues: Hydroxyethylthiazole kinase (265 aa).

Substrate is bound at residue M50. Residues R125 and T171 each contribute to the ATP site. G198 serves as a coordination point for substrate.

The protein belongs to the Thz kinase family. Requires Mg(2+) as cofactor.

It carries out the reaction 5-(2-hydroxyethyl)-4-methylthiazole + ATP = 4-methyl-5-(2-phosphooxyethyl)-thiazole + ADP + H(+). Its pathway is cofactor biosynthesis; thiamine diphosphate biosynthesis; 4-methyl-5-(2-phosphoethyl)-thiazole from 5-(2-hydroxyethyl)-4-methylthiazole: step 1/1. Its function is as follows. Catalyzes the phosphorylation of the hydroxyl group of 4-methyl-5-beta-hydroxyethylthiazole (THZ). This chain is Hydroxyethylthiazole kinase, found in Salmonella paratyphi A (strain ATCC 9150 / SARB42).